We begin with the raw amino-acid sequence, 443 residues long: Citrate transporter CitP (443 aa).

The next 13 membrane-spanning stretches (helical) occupy residues 27 to 47 (ISGIGLVRYAFMAVLLIIAIS), 59 to 79 (IFALVLMGHVFYYLGAHLPIF), 83 to 103 (LGGGSVFTILLTAILVATNVM), 114 to 134 (FINGMDFLGLYIVSLIASSLF), 151 to 171 (VAFISMALTAVVIGIVGVIIG), 177 to 197 (AILYIAMPIMAGGVGAGIVPL), 209 to 229 (SAGILSKLFPTVILGNLLAII), 268 to 288 (YVQLGVGLIIAVMFFMIGTML), 294 to 314 (GINAYAFIILSIVLTKAFGLL), 322 to 342 (VIMFGQVIVKNMTHALLAGVG), 350 to 370 (VLLAALSWQFVVLCLVSIVAI), 388 to 410 (AAITAGLANNSMGGTGNVAVLAA), and 422 to 442 (MGNRIGGALILVVAGILVTFM).

The protein belongs to the 2-hydroxycarboxylate transporter (2-HCT) (TC 2.A.24) family.

It is found in the cell membrane. It carries out the reaction (R)-lactate(in) + citrate(out) = (R)-lactate(out) + citrate(in). The catalysed reaction is (S)-lactate(in) + citrate(out) = (S)-lactate(out) + citrate(in). It catalyses the reaction citrate(in) + H(+)(in) = citrate(out) + H(+)(out). With respect to regulation, uptake of citrate is not affected by the absence or presence of Na(+) up to 25 mM and is increasingly inhibited by increasing Mg(2+) concentrations. Functionally, secondary transporter involved in citrate metabolism. During cometabolism of citrate and glucose, catalyzes the uptake of divalent citrate into the cell coupled to the exit of monovalent lactate, a product of citrate fermentation during citrate-glucose cometabolism (precursor/product exchange). The citrate/lactate exchange is electrogenic and results in the generation of a membrane potential. In the absence of glucose, i.e. when no lactate is produced, CitP catalyzes the proton-dependent transport of citrate and malate. Transports the divalent form of citrate and malate with the concomitant uptake of one proton, therefore translocating a single unit of negative charge across the membrane. In vitro, transports a range of substrates that contain the 2-hydroxycarboxylate motif, HO-CR(2)-COO(-), with a preference for malate, citrate and monovalent 2-hydroxyisobutyrate. Modification of the OH or the COO(-) groups of the 2-hydroxycarboxylate motif drastically reduces the affinity of the transporter for the substrates, indicating their relevance in substrate recognition. Significant activity is also observed with some 2-oxocarboxylates and a 3-hydroxycarboxylate. The polypeptide is Citrate transporter CitP (Leuconostoc mesenteroides subsp. mesenteroides).